The primary structure comprises 470 residues: L-seryl-tRNA(Sec) selenium transferase (470 aa).

At lysine 294 the chain carries N6-(pyridoxal phosphate)lysine.

The protein belongs to the SelA family. Pyridoxal 5'-phosphate serves as cofactor.

The protein resides in the cytoplasm. It carries out the reaction L-seryl-tRNA(Sec) + selenophosphate + H(+) = L-selenocysteinyl-tRNA(Sec) + phosphate. The protein operates within aminoacyl-tRNA biosynthesis; selenocysteinyl-tRNA(Sec) biosynthesis; selenocysteinyl-tRNA(Sec) from L-seryl-tRNA(Sec) (bacterial route): step 1/1. In terms of biological role, converts seryl-tRNA(Sec) to selenocysteinyl-tRNA(Sec) required for selenoprotein biosynthesis. This chain is L-seryl-tRNA(Sec) selenium transferase, found in Solidesulfovibrio magneticus (strain ATCC 700980 / DSM 13731 / RS-1) (Desulfovibrio magneticus).